Here is a 122-residue protein sequence, read N- to C-terminus: Large ribosomal subunit protein uL14 (122 aa).

The protein belongs to the universal ribosomal protein uL14 family. As to quaternary structure, part of the 50S ribosomal subunit. Forms a cluster with proteins L3 and L19. In the 70S ribosome, L14 and L19 interact and together make contacts with the 16S rRNA in bridges B5 and B8.

Binds to 23S rRNA. Forms part of two intersubunit bridges in the 70S ribosome. The sequence is that of Large ribosomal subunit protein uL14 from Chloroflexus aurantiacus (strain ATCC 29366 / DSM 635 / J-10-fl).